Consider the following 339-residue polypeptide: UDP-3-O-acylglucosamine N-acyltransferase (339 aa).

H251 (proton acceptor) is an active-site residue.

The protein belongs to the transferase hexapeptide repeat family. LpxD subfamily. As to quaternary structure, homotrimer.

It catalyses the reaction a UDP-3-O-[(3R)-3-hydroxyacyl]-alpha-D-glucosamine + a (3R)-hydroxyacyl-[ACP] = a UDP-2-N,3-O-bis[(3R)-3-hydroxyacyl]-alpha-D-glucosamine + holo-[ACP] + H(+). Its pathway is bacterial outer membrane biogenesis; LPS lipid A biosynthesis. Its function is as follows. Catalyzes the N-acylation of UDP-3-O-acylglucosamine using 3-hydroxyacyl-ACP as the acyl donor. Is involved in the biosynthesis of lipid A, a phosphorylated glycolipid that anchors the lipopolysaccharide to the outer membrane of the cell. This chain is UDP-3-O-acylglucosamine N-acyltransferase, found in Paramagnetospirillum magneticum (strain ATCC 700264 / AMB-1) (Magnetospirillum magneticum).